Consider the following 382-residue polypeptide: V-type proton ATPase subunit C 1 (382 aa).

Residue T2 is modified to N-acetylthreonine.

This sequence belongs to the V-ATPase C subunit family. As to quaternary structure, V-ATPase is a heteromultimeric enzyme made up of two complexes: the ATP-hydrolytic V1 complex and the proton translocation V0 complex. The V1 complex consists of three catalytic AB heterodimers that form a heterohexamer, three peripheral stalks each consisting of EG heterodimers, one central rotor including subunits D and F, and the regulatory subunits C and H. The proton translocation complex V0 consists of the proton transport subunit a, a ring of proteolipid subunits c9c'', rotary subunit d, subunits e and f, and two accessory subunits.

In terms of biological role, subunit of the V1 complex of vacuolar(H+)-ATPase (V-ATPase), a multisubunit enzyme composed of a peripheral complex (V1) that hydrolyzes ATP and a membrane integral complex (V0) that translocates protons. V-ATPase is responsible for acidifying and maintaining the pH of intracellular compartments and in some cell types, is targeted to the plasma membrane, where it is responsible for acidifying the extracellular environment. Subunit C is necessary for the assembly of the catalytic sector of the enzyme and is likely to have a specific function in its catalytic activity. In Xenopus tropicalis (Western clawed frog), this protein is V-type proton ATPase subunit C 1 (atp6v1c1).